The sequence spans 124 residues: Fluoride-specific ion channel FluC (124 aa).

The next 4 membrane-spanning stretches (helical) occupy residues 4–24, 35–55, 67–87, and 96–116; these read IVLL…LAGL, LGTF…WGVC, VVLL…TFES, and WLAF…LLWL. Glycine 75 and threonine 78 together coordinate Na(+).

Belongs to the fluoride channel Fluc/FEX (TC 1.A.43) family.

Its subcellular location is the cell inner membrane. It carries out the reaction fluoride(in) = fluoride(out). With respect to regulation, na(+) is not transported, but it plays an essential structural role and its presence is essential for fluoride channel function. In terms of biological role, fluoride-specific ion channel. Important for reducing fluoride concentration in the cell, thus reducing its toxicity. The protein is Fluoride-specific ion channel FluC of Nitratidesulfovibrio vulgaris (strain DSM 19637 / Miyazaki F) (Desulfovibrio vulgaris).